The chain runs to 1603 residues: Protein TIC 214 (1603 aa).

The next 6 helical transmembrane spans lie at 11–31, 58–78, 86–106, 131–151, 167–187, and 213–233; these read VLWASILSWINISSPLILFGL, LSGTVAVSGLILGQLIIFLSI, LLLKPHTVTLLVLPYLLFYWY, IFFDSFIFQLLNPVLLPSPIL, LFVLSCFFGWLSGHLFFFNCI, and FSIFVLACILLYLGRAPVPFF.

This sequence belongs to the TIC214 family. Part of the Tic complex.

Its subcellular location is the plastid. The protein resides in the chloroplast inner membrane. Functionally, involved in protein precursor import into chloroplasts. May be part of an intermediate translocation complex acting as a protein-conducting channel at the inner envelope. The protein is Protein TIC 214 of Physcomitrium patens (Spreading-leaved earth moss).